The chain runs to 253 residues: Indole-3-glycerol phosphate synthase (253 aa).

This sequence belongs to the TrpC family.

It carries out the reaction 1-(2-carboxyphenylamino)-1-deoxy-D-ribulose 5-phosphate + H(+) = (1S,2R)-1-C-(indol-3-yl)glycerol 3-phosphate + CO2 + H2O. It participates in amino-acid biosynthesis; L-tryptophan biosynthesis; L-tryptophan from chorismate: step 4/5. The protein is Indole-3-glycerol phosphate synthase of Bacillus cereus (strain ZK / E33L).